Reading from the N-terminus, the 488-residue chain is Ribulose bisphosphate carboxylase large chain (488 aa).

Residues N127 and T177 each contribute to the substrate site. The Proton acceptor role is filled by K179. K181 lines the substrate pocket. The Mg(2+) site is built by K205, D207, and E208. The residue at position 205 (K205) is an N6-carboxylysine. H297 serves as the catalytic Proton acceptor. The substrate site is built by R298, H330, and S382.

It belongs to the RuBisCO large chain family. Type I subfamily. Heterohexadecamer of 8 large chains and 8 small chains. Mg(2+) serves as cofactor.

The protein resides in the plastid. Its subcellular location is the chloroplast. It carries out the reaction 2 (2R)-3-phosphoglycerate + 2 H(+) = D-ribulose 1,5-bisphosphate + CO2 + H2O. The enzyme catalyses D-ribulose 1,5-bisphosphate + O2 = 2-phosphoglycolate + (2R)-3-phosphoglycerate + 2 H(+). Its function is as follows. RuBisCO catalyzes two reactions: the carboxylation of D-ribulose 1,5-bisphosphate, the primary event in carbon dioxide fixation, as well as the oxidative fragmentation of the pentose substrate in the photorespiration process. Both reactions occur simultaneously and in competition at the same active site. This chain is Ribulose bisphosphate carboxylase large chain, found in Cyanidioschyzon merolae (strain NIES-3377 / 10D) (Unicellular red alga).